Reading from the N-terminus, the 285-residue chain is MIKSNLVISSLAIVSSMSYAGVEFSNPSGQLGEPANYTQFANILSASELQISDPNGKKGNKEYFALDNDFTGIVNDNFYVDKQSQALVFKMANDHLRNELRVQKNFRTDLPDHFYTLYANVEILHPLQSMANSTSKQNEITFLQVHNKGLDDQGTHNVPHPLLRVVWKENNQGVKGHFWAITKNNAVICKGSFGKKNKDKEMCRADVAYSKIDLGPAPTDKGTDFTITVGNKTLAIDVNGQRKVEKNIDYWRHLLSYFKAGVYNQFTQGESEAHFNQLRYQVNTP.

The first 20 residues, 1 to 20, serve as a signal peptide directing secretion; the sequence is MIKSNLVISSLAIVSSMSYA.

Belongs to the polysaccharide lyase 6 family.

It catalyses the reaction Eliminative cleavage of alginate to give oligosaccharides with 4-deoxy-alpha-L-erythro-hex-4-enuronosyl groups at their non-reducing ends and beta-D-mannuronate at their reducing end.. The polypeptide is Alginate lyase (alxM) (Photobacterium sp. (strain ATCC 43367)).